The sequence spans 351 residues: Outer membrane protein A (351 aa).

The N-terminal stretch at 1 to 21 is a signal peptide; sequence MKKTAIAITVALAGFATVAQA. Transmembrane regions (beta stranded) follow at residues 27 to 37, 55 to 66, 70 to 78, 96 to 107, 112 to 120, 147 to 156, 161 to 168, and 187 to 195; these read TWYTGAKLGWS, QLGAGAFGGYQV, VGFEMGYDW, QGVQLTAKLGYP, LDVYTRLGG, PVFAGGVEWA, IATRLEYQ, and LLSLGVSYR. A run of 4 repeats spans residues 206 to 207, 208 to 209, 210 to 211, and 212 to 213. Positions 206–213 are 4 X 2 AA tandem repeats of A-P; it reads APAPAPAP. One can recognise an OmpA-like domain in the interval 215–343; the sequence is VQTKHFTLKS…RVEIEVKGIK (129 aa). A disulfide bridge links Cys-316 with Cys-328.

This sequence belongs to the outer membrane OOP (TC 1.B.6) superfamily. OmpA family. As to quaternary structure, monomer and homodimer.

Its subcellular location is the cell outer membrane. Its function is as follows. With TolR probably plays a role in maintaining the position of the peptidoglycan cell wall in the periplasm. Acts as a porin with low permeability that allows slow penetration of small solutes; an internal gate slows down solute passage. In terms of biological role, required for conjugation with F-type plasmids; probably serves as the mating receptor on recipient cells. This chain is Outer membrane protein A, found in Shigella dysenteriae.